A 151-amino-acid polypeptide reads, in one-letter code: Small ribosomal subunit protein uS13 (151 aa).

The protein belongs to the universal ribosomal protein uS13 family. Part of the 30S ribosomal subunit. Forms a loose heterodimer with protein S19. Forms two bridges to the 50S subunit in the 70S ribosome.

In terms of biological role, located at the top of the head of the 30S subunit, it contacts several helices of the 16S rRNA. In the 70S ribosome it contacts the 23S rRNA (bridge B1a) and protein L5 of the 50S subunit (bridge B1b), connecting the 2 subunits; these bridges are implicated in subunit movement. This is Small ribosomal subunit protein uS13 from Methanospirillum hungatei JF-1 (strain ATCC 27890 / DSM 864 / NBRC 100397 / JF-1).